The primary structure comprises 65 residues: Gallinacin-12 (65 aa).

An N-terminal signal peptide occupies residues 1 to 19 (MRNLCFVFIFISLLAHGST). 3 disulfides stabilise this stretch: Cys-25-Cys-54, Cys-32-Cys-47, and Cys-37-Cys-55.

It belongs to the beta-defensin family. Expressed in the large intestine, kidney liver, gall bladder, testis, ovary and male and female reproductive tracts. Expressed in the ovarian stroma and the theca and granulosa layers of the ovarian follicle.

Its subcellular location is the secreted. It localises to the cytoplasmic granule. Has bactericidal activity. The chain is Gallinacin-12 (GAL12) from Gallus gallus (Chicken).